The following is a 662-amino-acid chain: UPF0313 protein CPF_1407 (662 aa).

The Radical SAM core domain occupies Ala296–Lys567. [4Fe-4S] cluster contacts are provided by Cys310, Cys314, and Cys317. The interval Ile596–Arg662 is disordered. Over residues Ser618–Lys632 the composition is skewed to basic and acidic residues. Over residues Arg633–Lys644 the composition is skewed to basic residues.

It belongs to the UPF0313 family. Requires [4Fe-4S] cluster as cofactor.

In Clostridium perfringens (strain ATCC 13124 / DSM 756 / JCM 1290 / NCIMB 6125 / NCTC 8237 / Type A), this protein is UPF0313 protein CPF_1407.